Here is a 341-residue protein sequence, read N- to C-terminus: Protein RecA, plasmid (341 aa).

An ATP-binding site is contributed by 80 to 87 (GAESSGKT).

It belongs to the RecA family.

It is found in the cytoplasm. In terms of biological role, can catalyze the hydrolysis of ATP in the presence of single-stranded DNA, the ATP-dependent uptake of single-stranded DNA by duplex DNA, and the ATP-dependent hybridization of homologous single-stranded DNAs. It interacts with LexA causing its activation and leading to its autocatalytic cleavage. The chain is Protein RecA, plasmid from Lactococcus lactis subsp. lactis (Streptococcus lactis).